A 413-amino-acid chain; its full sequence is Intracellular hyaluronan-binding protein 4 (413 aa).

A phosphoserine mark is found at Ser7 and Ser36. Positions 40 to 64 (DILREAERRRQQQLQRKRRDEAAAA) form a coiled coil. Residues 42-206 (LREAERRRQQ…RGGPGNRVFD (165 aa)) are disordered. The segment covering 62-82 (AAAAGAGPRGGRSPAGASGHR) has biased composition (low complexity). The residue at position 70 (Arg70) is an Omega-N-methylarginine. At Ser74 the chain carries Phosphoserine. Residues 87–97 (GRRESQKERKS) are compositionally biased toward basic and acidic residues. Ser108 carries the phosphoserine modification. Over residues 139-182 (MLERAERRSYREYRPYETERQADFTAEKFPDEKPGDRFDRDRPL) the composition is skewed to basic and acidic residues. Residues 184–201 (GRGGPRGGMRGRGRGGPG) show a composition bias toward gly residues. Residues Lys213 and Lys276 each participate in a glycyl lysine isopeptide (Lys-Gly) (interchain with G-Cter in SUMO1); alternate cross-link. Residues Lys213 and Lys276 each participate in a glycyl lysine isopeptide (Lys-Gly) (interchain with G-Cter in SUMO2); alternate cross-link. Positions 227-320 (VRTEDNMGGC…IRKPESTVPS (94 aa)) are disordered. Over residues 294–315 (DEWKNLQEQTRPKPEFNIRKPE) the composition is skewed to basic and acidic residues. Lys336 participates in a covalent cross-link: Glycyl lysine isopeptide (Lys-Gly) (interchain with G-Cter in SUMO1); alternate. Lys336 is covalently cross-linked (Glycyl lysine isopeptide (Lys-Gly) (interchain with G-Cter in SUMO2); alternate). A phosphothreonine; by PKC mark is found at Thr354 and Thr375. Residues 360–413 (NFGNLPRPGRGARGGTRGGRGRIRRAENYGPRAEVVMQDVAPNPDDPEDFPALS) are disordered. Positions 404-413 (DDPEDFPALS) are enriched in acidic residues.

This sequence belongs to the SERBP1-HABP4 family. As to quaternary structure, associates with ribosomes; promoting ribosome stabilization. Interacts with EEF2/eEF2; promoting ribosome stabilization. Interacts with FMR1. Interacts with FXR1 and FXR2. Interacts with CHD3 (via C-terminus). Interacts (via C-terminus) with RACK1. Interacts with p53/TP53. Interacts (via N-terminus) with SRSF9; this interaction is direct. Interacts with SYNCRIP; this interaction is direct. Interacts with MEF2C (via N-terminus); this interaction decreases DNA-binding activity of MEF2C in myocardial cells in response to mechanical stress. Interacts with PRMT1 (via N-terminus). Interacts with SPIN1. Methylated. Methylation is decreased by phorbol 12-myristate 13-acetate (PMA)-activated PKC, in vitro. Post-translationally, phosphorylated by phorbol 12-myristate 13-acetate (PMA)-activated PKC isoforms at Thr-354 and Thr-375. As to expression, highly expressed in brain, heart, and kidney, and moderately expressed in skeletal muscle. Also expressed in a variety of tumor cell lines and in activated but not resting leukocytes.

The protein localises to the nucleus. The protein resides in the cytoplasm. It localises to the stress granule. It is found in the sarcoplasm. Its subcellular location is the nuclear body. The protein localises to the nucleolus. The protein resides in the nucleus speckle. It localises to the cajal body. It is found in the gem. Ribosome-binding protein that promotes ribosome hibernation, a process during which ribosomes are stabilized in an inactive state and preserved from proteasomal degradation. Acts via its association with EEF2/eEF2 factor at the A-site of the ribosome, promoting ribosome stabilization in an inactive state compatible with storage. Plays a key role in ribosome hibernation in the mature oocyte by promoting ribosome stabilization. Ribosomes, which are produced in large quantities during oogenesis, are stored and translationally repressed in the oocyte and early embryo. Also binds RNA, regulating transcription and pre-mRNA splicing. Binds (via C-terminus) to poly(U) RNA. Seems to play a role in PML-nuclear bodies formation. Negatively regulates DNA-binding activity of the transcription factor MEF2C in myocardial cells in response to mechanical stress. The sequence is that of Intracellular hyaluronan-binding protein 4 from Homo sapiens (Human).